Reading from the N-terminus, the 217-residue chain is E3 ubiquitin-protein ligase znrf2 (217 aa).

Disordered regions lie at residues 1–27 (MGAKQSSPAANGRTRAYSGSDLPSATA) and 63–111 (QFIS…ERST). A lipid anchor (N-myristoyl glycine) is attached at glycine 2. Positions 68–100 (RTRSVGPSARPQSGINIPNSGAYSSADSGNSTP) are enriched in polar residues. The RING-type; atypical zinc finger occupies 174-215 (CAICLEELLQGDTIARLPCLCIYHKGCIDEWFEVNRSCPEHP).

Its subcellular location is the endosome membrane. The protein resides in the lysosome membrane. The protein localises to the presynaptic cell membrane. It carries out the reaction S-ubiquitinyl-[E2 ubiquitin-conjugating enzyme]-L-cysteine + [acceptor protein]-L-lysine = [E2 ubiquitin-conjugating enzyme]-L-cysteine + N(6)-ubiquitinyl-[acceptor protein]-L-lysine.. Its pathway is protein modification; protein ubiquitination. Its function is as follows. May play a role in the establishment and maintenance of neuronal transmission and plasticity via its ubiquitin ligase activity. E3 ubiquitin ligases accept ubiquitin from an E2 ubiquitin-conjugating enzyme in the form of a thioester and then directly transfer the ubiquitin to targeted substrates. The chain is E3 ubiquitin-protein ligase znrf2 (znrf2) from Danio rerio (Zebrafish).